Consider the following 192-residue polypeptide: Peptidyl-tRNA hydrolase (192 aa).

Y18 is a tRNA binding site. The Proton acceptor role is filled by H23. F69, N71, and N117 together coordinate tRNA.

Belongs to the PTH family. In terms of assembly, monomer.

The protein localises to the cytoplasm. The catalysed reaction is an N-acyl-L-alpha-aminoacyl-tRNA + H2O = an N-acyl-L-amino acid + a tRNA + H(+). Its function is as follows. Hydrolyzes ribosome-free peptidyl-tRNAs (with 1 or more amino acids incorporated), which drop off the ribosome during protein synthesis, or as a result of ribosome stalling. Functionally, catalyzes the release of premature peptidyl moieties from peptidyl-tRNA molecules trapped in stalled 50S ribosomal subunits, and thus maintains levels of free tRNAs and 50S ribosomes. In Neisseria gonorrhoeae (strain ATCC 700825 / FA 1090), this protein is Peptidyl-tRNA hydrolase.